Reading from the N-terminus, the 112-residue chain is Cytochrome c (112 aa).

Cys-23, Cys-26, and His-27 together coordinate heme c. Residue Lys-81 is modified to N6,N6,N6-trimethyllysine. Met-89 contributes to the heme c binding site. Lys-95 is modified (N6,N6,N6-trimethyllysine).

Belongs to the cytochrome c family. In terms of processing, binds 1 heme c group covalently per subunit.

The protein localises to the mitochondrion intermembrane space. Electron carrier protein. The oxidized form of the cytochrome c heme group can accept an electron from the heme group of the cytochrome c1 subunit of cytochrome reductase. Cytochrome c then transfers this electron to the cytochrome oxidase complex, the final protein carrier in the mitochondrial electron-transport chain. This chain is Cytochrome c (CC-1), found in Arabidopsis thaliana (Mouse-ear cress).